The chain runs to 857 residues: Cadherin-related family member 1a (857 aa).

The first 25 residues, 1 to 25, serve as a signal peptide directing secretion; it reads MKNAREIQFSSFLLLAHFCFVGAQS. Topologically, residues 26–709 are extracellular; that stretch reads DYAPYFYDNG…RENPMHFLGL (684 aa). 6 consecutive Cadherin domains span residues 40–139, 140–252, 253–359, 365–478, 479–582, and 574–693; these read NGNM…RPQF, QNMP…PPIF, IGTP…PPTF, PQNV…APKF, TSDF…PPAF, and DLND…GPLT. The helical transmembrane segment at 710-730 threads the bilayer; sequence ISGVILILVFVTVIISTVIFV. Over 731–857 the chain is Cytoplasmic; that stretch reads RRNKANRILP…LEQKNMANRY (127 aa). The segment at 746–765 is disordered; the sequence is RKKRKPQKQDDFQEPFREEQ. Residues 752 to 765 show a composition bias toward basic and acidic residues; sequence QKQDDFQEPFREEQ.

As to expression, expressed in photoreceptor cells of the outer nuclear layer of the retina and in the pinal gland.

Its subcellular location is the membrane. In terms of biological role, potential calcium-dependent cell-adhesion protein. Plays a role in the organization of retinal cell layers and Muller glia morphology. The chain is Cadherin-related family member 1a from Danio rerio (Zebrafish).